The sequence spans 612 residues: Transcription factor unc-37 (612 aa).

The tract at residues 143-228 (FASPHVNGGD…SNSRARQQQQ (86 aa)) is disordered. Positions 150–159 (GGDGAGGSSG) are enriched in gly residues. The tract at residues 153-196 (GAGGSSGGASEAKKAKLEDPDDGELEIDVTNDDHPSTASNGGAA) is CCN domain. The segment covering 171 to 182 (DPDDGELEIDVT) has biased composition (acidic residues). Over residues 202–221 (DSTNSVASSGASTPSIASNS) the composition is skewed to polar residues. 6 WD repeats span residues 308–339 (GIPT…RVYT), 372–402 (LKEN…ALWD), 414–444 (TDSQ…LIYD), 456–486 (GHQD…RCWD), 538–568 (QHES…NAWR), and 579–609 (KENS…TLYA).

Belongs to the WD repeat Groucho/TLE family. In terms of assembly, interacts with unc-4. Interacts with ref-1. May interact with mls-1.

The protein localises to the nucleus. In terms of biological role, transcriptional corepressor that functions with the neural specificity gene unc-4 to govern motor neuron identity. In concert with unc-4, represses the expression of VB-specific genes such as ceh-12, thereby preventing the adoption of VB motor neuron fate. May function with transcription factor mls-1 to promote uterine muscle specification and formation. The sequence is that of Transcription factor unc-37 (unc-37) from Caenorhabditis elegans.